Reading from the N-terminus, the 636-residue chain is Carbon monoxide dehydrogenase 2 (636 aa).

Positions 39, 47, 48, 51, 56, and 70 each coordinate [4Fe-4S] cluster. [Ni-4Fe-5S] cluster contacts are provided by histidine 261, cysteine 295, cysteine 333, cysteine 446, cysteine 476, and cysteine 526.

This sequence belongs to the Ni-containing carbon monoxide dehydrogenase family. As to quaternary structure, homodimer. Requires [4Fe-4S] cluster as cofactor. It depends on [Ni-4Fe-5S] cluster as a cofactor.

It localises to the cytoplasm. It is found in the cell membrane. It carries out the reaction CO + 2 oxidized [2Fe-2S]-[ferredoxin] + H2O = 2 reduced [2Fe-2S]-[ferredoxin] + CO2 + 2 H(+). With respect to regulation, inactivated by O(2). In terms of biological role, CODH oxidizes carbon monoxide coupled, via CooF, to the reduction of a hydrogen cation by a hydrogenase (possibly CooH). This is Carbon monoxide dehydrogenase 2 (cooS2) from Carboxydothermus hydrogenoformans (strain ATCC BAA-161 / DSM 6008 / Z-2901).